The sequence spans 86 residues: U1-theraphotoxin-Pc1a (86 aa).

A signal peptide spans 1–21 (MMRVLIVTAVFTFFLVLTSSG). A propeptide spanning residues 22 to 49 (HDEDNEQRNILEGMFLDRAIETPKGLEE) is cleaved from the precursor. 3 cysteine pairs are disulfide-bonded: C53/C70, C60/C75, and C69/C80. V84 is modified (valine amide).

In terms of tissue distribution, expressed by the venom gland.

Its subcellular location is the secreted. In terms of biological role, possesses strong antiplasmodial activity against the intra-erythrocyte stage of P.falciparum in vitro. IC(50) for inhibiting P.falciparum growth is 1.59 uM. Interacts with infected and healthy erythrocytes. Does not lyse erythrocytes, is not cytotoxic to nucleated mammalian cells, and does not inhibit neuromuscular function. Has neither antibacterial nor antifungal activity. The sequence is that of U1-theraphotoxin-Pc1a from Psalmopoeus cambridgei (Trinidad chevron tarantula).